A 442-amino-acid chain; its full sequence is Endothelin receptor type B (442 aa).

The N-terminal stretch at 1 to 26 (MQPPPSLCGRALVALVLACGLSRIWG) is a signal peptide. Residues 27 to 101 (EERGFPPDRA…GSIEIKETFK (75 aa)) are Extracellular-facing. N59 carries an N-linked (GlcNAc...) asparagine glycan. The interval 69 to 88 (AEVPKGDRTAGSPPRTISPP) is disordered. A helical transmembrane segment spans residues 102–126 (YINTVVSCLVFVLGIIGNSTLLRII). The Cytoplasmic portion of the chain corresponds to 127–137 (YKNKCMRNGPN). A helical membrane pass occupies residues 138-163 (ILIASLALGDLLHIIIDIPITVYKLL). At 164–175 (AEDWPFGVEMCK) the chain is on the extracellular side. C174 and C255 form a disulfide bridge. The chain crosses the membrane as a helical span at residues 176–197 (LVPFIQKASVGITVLSLCALSI). The Cytoplasmic portion of the chain corresponds to 198-218 (DRYRAVASWSRIKGIGVPKWT). A helical transmembrane segment spans residues 219–243 (AVEIVLIWVVSVVLAVPEAVGFDMI). Over 244 to 271 (TIDYKGRYLRICLLHPTQKTAFMQFYKT) the chain is Extracellular. The helical transmembrane segment at 272–296 (AKDWWLFSFYFCLPLAITAFFYTLM) threads the bilayer. Over 297–324 (TCEMLRKKSGMQIALNDHLKQRREVAKT) the chain is Cytoplasmic. Position 305 is a phosphoserine (S305). A helical membrane pass occupies residues 325–350 (VFCLVLVFALCWLPLHLSRILKLTIY). Topologically, residues 351–362 (DQNDPNRCELLS) are extracellular. Residues 363-389 (FLLVLDYIGINMASLNSCINPIALYLV) traverse the membrane as a helical segment. The Cytoplasmic segment spans residues 390-442 (SKRFKNCFKSCLCCWCQSFEEKQSLEEKQSCLKFKANDHGYDNFRSSNKYSSS). S-palmitoyl cysteine attachment occurs at residues C402, C403, and C405. S419 carries the post-translational modification Phosphoserine. Y439 is subject to Phosphotyrosine. Phosphoserine is present on residues S440, S441, and S442.

The protein belongs to the G-protein coupled receptor 1 family. Endothelin receptor subfamily. EDNRB sub-subfamily.

The protein localises to the cell membrane. Its function is as follows. Non-specific receptor for endothelin 1, 2, and 3. Mediates its action by association with G proteins that activate a phosphatidylinositol-calcium second messenger system. The protein is Endothelin receptor type B (EDNRB) of Canis lupus familiaris (Dog).